The following is a 414-amino-acid chain: eIF5-mimic protein 1 (414 aa).

The interval 1–22 (MNKNQKPVLTGQRFKTRKRDEK) is disordered. Positions 248–414 (VQQSLGTRKE…LQNAEEEFRI (167 aa)) constitute a W2 domain.

Belongs to the BZW family.

It is found in the cytoplasm. Functionally, translation initiation regulator which may repress non-AUG initiated translation and repeat-associated non-AUG (RAN) initiated translation by acting as a competitive inhibitor of eukaryotic translation initiation factor 5 (EIF5) function. The chain is eIF5-mimic protein 1 (BZW2) from Gallus gallus (Chicken).